The following is a 249-amino-acid chain: Coproheme decarboxylase (249 aa).

Residues R131, 145 to 149, H172, and Q185 each bind Fe-coproporphyrin III; that span reads YPMDK. Residue Y145 is part of the active site.

The protein belongs to the ChdC family. Type 1 subfamily. Fe-coproporphyrin III is required as a cofactor.

The catalysed reaction is Fe-coproporphyrin III + 2 H2O2 + 2 H(+) = heme b + 2 CO2 + 4 H2O. The enzyme catalyses Fe-coproporphyrin III + H2O2 + H(+) = harderoheme III + CO2 + 2 H2O. It carries out the reaction harderoheme III + H2O2 + H(+) = heme b + CO2 + 2 H2O. The protein operates within porphyrin-containing compound metabolism; protoheme biosynthesis. Functionally, involved in coproporphyrin-dependent heme b biosynthesis. Catalyzes the decarboxylation of Fe-coproporphyrin III (coproheme) to heme b (protoheme IX), the last step of the pathway. The reaction occurs in a stepwise manner with a three-propionate intermediate. The sequence is that of Coproheme decarboxylase from Staphylococcus saprophyticus subsp. saprophyticus (strain ATCC 15305 / DSM 20229 / NCIMB 8711 / NCTC 7292 / S-41).